Consider the following 593-residue polypeptide: DNA topoisomerase I, mitochondrial (593 aa).

A mitochondrion-targeting transit peptide spans 1–43 (MLLLWLRALCRRFQHVPRRVPSRQVSRGSKASRAGWGETSKSS). Interaction with DNA stretches follow at residues 254–255 (KY), 317–322 (RTGNEK), and 414–416 (TAK). Residues 261–593 (SSKPKGEMDW…FNQAGEDFEF (333 aa)) enclose the Topo IB-type catalytic domain. Tyrosine 551 functions as the O-(3'-phospho-DNA)-tyrosine intermediate in the catalytic mechanism.

The protein belongs to the type IB topoisomerase family. It depends on Ca(2+) as a cofactor. Mg(2+) serves as cofactor.

It is found in the mitochondrion. It carries out the reaction ATP-independent breakage of single-stranded DNA, followed by passage and rejoining.. Releases the supercoiling and torsional tension of DNA introduced during duplication of mitochondrial DNA by transiently cleaving and rejoining one strand of the DNA duplex. Introduces a single-strand break via transesterification at a target site in duplex DNA. The scissile phosphodiester is attacked by the catalytic tyrosine of the enzyme, resulting in the formation of a DNA-(3'-phosphotyrosyl)-enzyme intermediate and the expulsion of a 5'-OH DNA strand. The free DNA strand then rotates around the intact phosphodiester bond on the opposing strand, thus removing DNA supercoils. Finally, in the religation step, the DNA 5'-OH attacks the covalent intermediate to expel the active-site tyrosine and restore the DNA phosphodiester backbone. In Rattus norvegicus (Rat), this protein is DNA topoisomerase I, mitochondrial (Top1mt).